A 397-amino-acid chain; its full sequence is Anhydro-N-acetylmuramic acid kinase (397 aa).

Gly-9 to Asp-16 is an ATP binding site.

Belongs to the anhydro-N-acetylmuramic acid kinase family.

It catalyses the reaction 1,6-anhydro-N-acetyl-beta-muramate + ATP + H2O = N-acetyl-D-muramate 6-phosphate + ADP + H(+). It functions in the pathway amino-sugar metabolism; 1,6-anhydro-N-acetylmuramate degradation. The protein operates within cell wall biogenesis; peptidoglycan recycling. Catalyzes the specific phosphorylation of 1,6-anhydro-N-acetylmuramic acid (anhMurNAc) with the simultaneous cleavage of the 1,6-anhydro ring, generating MurNAc-6-P. Is required for the utilization of anhMurNAc either imported from the medium or derived from its own cell wall murein, and thus plays a role in cell wall recycling. The sequence is that of Anhydro-N-acetylmuramic acid kinase from Rhodococcus erythropolis (strain PR4 / NBRC 100887).